The chain runs to 305 residues: Triplex capsid protein 2 (305 aa).

The protein belongs to the herpesviridae TRX2 protein family. As to quaternary structure, interacts with TRX1 and major capisd protein/MCP.

It localises to the virion. Its subcellular location is the host nucleus. Functionally, structural component of the T=16 icosahedral capsid. The capsid is composed of pentamers and hexamers of major capsid protein/MCP, which are linked together by heterotrimers called triplexes. These triplexes are formed by a single molecule of triplex protein 1/TRX1 and two copies of triplex protein 2/TRX2. Additionally, TRX1 is required for efficient transport of TRX2 to the nucleus, which is the site of capsid assembly. This Homo sapiens (Human) protein is Triplex capsid protein 2.